We begin with the raw amino-acid sequence, 383 residues long: Na(+)/H(+) antiporter NhaA (383 aa).

The next 11 helical transmembrane spans lie at Leu10 to Pro30, Leu56 to Ile76, Ile91 to Ser111, Gly121 to Gly141, Leu150 to Phe170, Ser174 to Asn194, Val206 to Ala226, Pro254 to Ser274, Ile289 to Phe308, Gly327 to Phe347, and Ala355 to Leu375.

This sequence belongs to the NhaA Na(+)/H(+) (TC 2.A.33) antiporter family.

The protein resides in the cell inner membrane. It catalyses the reaction Na(+)(in) + 2 H(+)(out) = Na(+)(out) + 2 H(+)(in). In terms of biological role, na(+)/H(+) antiporter that extrudes sodium in exchange for external protons. This Francisella tularensis subsp. tularensis (strain SCHU S4 / Schu 4) protein is Na(+)/H(+) antiporter NhaA.